Here is a 205-residue protein sequence, read N- to C-terminus: Holliday junction branch migration complex subunit RuvA (205 aa).

The domain I stretch occupies residues 1 to 62 (MFEYVTGYVE…EDIMALYGFK (62 aa)). The segment at 63–141 (TREERLLFTK…DVVPDAFVDL (79 aa)) is domain II. Positions 142-152 (FSDTERFDEKK) are flexible linker. The domain III stretch occupies residues 153–205 (GTSAELDEALEALRALGYAEREVSRVVPELLKESLTTDQYIKKALSLLLNGKR).

It belongs to the RuvA family. Homotetramer. Forms an RuvA(8)-RuvB(12)-Holliday junction (HJ) complex. HJ DNA is sandwiched between 2 RuvA tetramers; dsDNA enters through RuvA and exits via RuvB. An RuvB hexamer assembles on each DNA strand where it exits the tetramer. Each RuvB hexamer is contacted by two RuvA subunits (via domain III) on 2 adjacent RuvB subunits; this complex drives branch migration. In the full resolvosome a probable DNA-RuvA(4)-RuvB(12)-RuvC(2) complex forms which resolves the HJ.

Its subcellular location is the cytoplasm. Its function is as follows. The RuvA-RuvB-RuvC complex processes Holliday junction (HJ) DNA during genetic recombination and DNA repair, while the RuvA-RuvB complex plays an important role in the rescue of blocked DNA replication forks via replication fork reversal (RFR). RuvA specifically binds to HJ cruciform DNA, conferring on it an open structure. The RuvB hexamer acts as an ATP-dependent pump, pulling dsDNA into and through the RuvAB complex. HJ branch migration allows RuvC to scan DNA until it finds its consensus sequence, where it cleaves and resolves the cruciform DNA. The polypeptide is Holliday junction branch migration complex subunit RuvA (Bacillus cereus (strain G9842)).